Reading from the N-terminus, the 200-residue chain is NADH-quinone oxidoreductase subunit C (200 aa).

The protein belongs to the complex I 30 kDa subunit family. As to quaternary structure, NDH-1 is composed of 14 different subunits. Subunits NuoB, C, D, E, F, and G constitute the peripheral sector of the complex.

Its subcellular location is the cell inner membrane. The enzyme catalyses a quinone + NADH + 5 H(+)(in) = a quinol + NAD(+) + 4 H(+)(out). Its function is as follows. NDH-1 shuttles electrons from NADH, via FMN and iron-sulfur (Fe-S) centers, to quinones in the respiratory chain. The immediate electron acceptor for the enzyme in this species is believed to be ubiquinone. Couples the redox reaction to proton translocation (for every two electrons transferred, four hydrogen ions are translocated across the cytoplasmic membrane), and thus conserves the redox energy in a proton gradient. The chain is NADH-quinone oxidoreductase subunit C from Burkholderia vietnamiensis (strain G4 / LMG 22486) (Burkholderia cepacia (strain R1808)).